The sequence spans 438 residues: ATP-dependent RNA helicase sub2 (438 aa).

Residues T23–T36 show a composition bias toward low complexity. The segment at T23–T42 is disordered. The Q motif signature appears at T58–I86. The region spanning I86–V261 is the Helicase ATP-binding domain. A99 to T106 is a binding site for ATP. The DEAD box motif lies at D208–D211. A Helicase C-terminal domain is found at K289–S434.

It belongs to the DEAD box helicase family. DECD subfamily.

It is found in the nucleus. It carries out the reaction ATP + H2O = ADP + phosphate + H(+). In terms of biological role, ATP-binding RNA helicase involved in transcription elongation and required for the export of mRNA out of the nucleus. SUB2 also plays a role in pre-mRNA splicing and spliceosome assembly. May be involved in rDNA and telomeric silencing, and maintenance of genome integrity. The protein is ATP-dependent RNA helicase sub2 (sub2) of Aspergillus terreus (strain NIH 2624 / FGSC A1156).